The following is a 58-amino-acid chain: Metallothionein-1 (58 aa).

The interval 1 to 28 (PGPCCNDKCVCKEGGCKEGCQCTSCRCS) is beta. Residues Cys4, Cys5, Cys9, Cys11, Cys16, Cys20, Cys22, Cys25, Cys27, Cys30, Cys33, Cys37, Cys39, Cys45, Cys49, Cys53, Cys55, and Cys56 each contribute to the a divalent metal cation site. The tract at residues 29–58 (PCEKCSSGCKCANKEECSKTCSKACSCCPT) is alpha.

The protein belongs to the metallothionein superfamily. Type 3 family.

Its function is as follows. Metallothioneins have a high content of cysteine residues that bind various heavy metals. Class I MTS in marine crustacea are involved in the sequestration of elevated levels of heavy-metal ions. In Scylla serrata (Mud crab), this protein is Metallothionein-1.